The sequence spans 1264 residues: MTKTTKPKEKAAAGGAVIGSGSGLGSVTKAGGGSLLSNAADSKIRTAKSNNNKRQAGRAATALAATTTASALAATTTAGATGSNAAANETEIAIETENGEAATPTAAATAAAANLSSLESARSQALTSVVSETARQAVTTANASATSTSTVTAATEIATATASDTAATSEAAIDDDPSAINTNNNNNNSKAQNDASESVKTKVISYHQSEDQQQQQQQQAQIYEQQQQFLSQQLISHHQQEQHQQAQQQQHQQVVQEQHQASWLAYDLTSGSAAAAAAAAAAASHPHLFGQFSYPPSHHTPTQLYEHYPSTDPIMRNNFAFYSVYTGGGGGVGVGMTSHEHLAAAAAAAAAVAQGTTPNIDEVIQDTLKDECFEDGHSTDYHVLTSVSDMHTLKDSSPYALTHEQLHQQQHHHQQQLHHHQQQQQQLYHQQQQQQQQQQHHHHHNNSTSSAGGDSPSSSHALSTLQSFTQLTSATQRDSLSPENDAYFAAAQLGSSLQNSSVYAGSLLTQTANGIQYGMQSPNQTQAHLQQQHHQQQQQQHQQHQQQQLQQQQQQHHHNQHQHHNSSSSSPGPAGLHHSSSSAATAAAVAAATAAVNGHNSSLEDGYGSPRSSHSGGGGGGTLPAFQRIAYPNSGSVERYAPITNYRGQNDTWFDPLSYATSSSGQAQLGVGVGAGVVSNVIRNGRAISAANAAAAAAADGTTGRVDPGTFLSASASLSAMAAESGGDFYKPNSFNVGGGGRSKANTSGAASSYSCPGSNATSAATSAVASGTAATAATTLDEHVSRANSRRLSASKRAGLSCSNCHTTHTSLWRRNPAGEPVCNACGLYYKLHSVPRPLTMKKDTIQKRKRKPKGTKSEKSKSKSKNALNAIMESGSLVTNCHNVGVVLDSSQMDVNDDMKPQLDLKPYNSYSSQPQQQLPQYQQQQQLLMADQHSSAASSPHSMGSTSLSPSAMSHQHQTHPHQQQQQQLCSGLDMSPNSNYQMSPLNMQQHQQQQSCSMQHSPSTPTSIFNTPSPTHQLHNNNNNNNNSSIFNNNNNNNSSSNENNNKLIQKYLQAQQLSSSSNSGSTSDHQLLAQLLPNSITAAAAAAAAAAAAAIKTEALSLTSQANCSTASAGLMVTSTPTTASSTLSSLSHSNIISLQNPYHQAGMTLCKPTRPSPPYYLTPEEDEQPALIKMEEMDQSQQQQQQQQHQQQQHGEIMLSRSASLDEHYELAAFQRHQQQQQQLQQQTAALLGQHEQHVTNYAMHKFGVDRETVVKME.

Basic and acidic residues predominate over residues 1–11 (MTKTTKPKEKA). Disordered stretches follow at residues 1-25 (MTKT…SGLG), 161-200 (TASD…ESVK), 234-253 (LISH…QHQQ), 405-463 (QLHQ…HALS), 523-585 (NQTQ…SAAT), and 599-627 (HNSS…PAFQ). The span at 16–25 (AVIGSGSGLG) shows a compositional bias: gly residues. The span at 161 to 171 (TASDTAATSEA) shows a compositional bias: low complexity. Residues 189–198 (SKAQNDASES) are compositionally biased toward polar residues. The segment covering 409-421 (QQHHHQQQLHHHQ) has biased composition (basic residues). Low complexity-rich tracts occupy residues 422 to 438 (QQQQ…QQQQ), 447 to 459 (STSS…PSSS), and 523 to 554 (NQTQ…QQQQ). Over residues 555 to 564 (QHHHNQHQHH) the composition is skewed to basic residues. 2 stretches are compositionally biased toward low complexity: residues 565–585 (NSSS…SAAT) and 599–614 (HNSS…RSSH). Residues 803-827 (CSNCHTTHTSLWRRNPAGEPVCNAC) form a GATA-type zinc finger. Disordered regions lie at residues 841 to 867 (TMKK…SKSK), 899 to 1048 (DDMK…SNEN), and 1181 to 1202 (EEMD…QHGE). 2 stretches are compositionally biased toward low complexity: residues 909-950 (PYNS…GSTS) and 985-1007 (QMSP…HSPS). Over residues 1008–1023 (TPTSIFNTPSPTHQLH) the composition is skewed to polar residues. Composition is skewed to low complexity over residues 1024-1048 (NNNN…SNEN) and 1185-1200 (QSQQ…QQQH). Ser1208 and Ser1210 each carry phosphoserine.

In terms of assembly, interacts (via GATA-type Zn-finger domain) with Bfc; this interaction enhances srp binding to the promoter of crq/croquemort.

The protein localises to the nucleus. Functionally, may function as a transcriptional activator protein and may play a key role in the organogenesis of the fat body. Binds a sequence element (5'-[TA]GATAA-3') found in the larval promoters of all known alcohol dehydrogenase (ADH) genes. Acts as a homeotic gene downstream of the terminal gap gene HKB to promote morphogenesis and differentiation of anterior and posterior midgut. Together with transcriptional cofactor Bfc directly binds the promoter of phagocytic receptor crq/croquemort to upregulate its expression and stimulate efferocytosis in response to apoptotic cells, including during embryogenesis. This is Box A-binding factor (srp) from Drosophila melanogaster (Fruit fly).